The primary structure comprises 373 residues: Sodium-dependent organic anion transporter (373 aa).

Residues 1-15 are compositionally biased toward polar residues; the sequence is MSTDCAGNSTCPVNS. Positions 1–21 are disordered; sequence MSTDCAGNSTCPVNSTEEDPP. Residues 1–32 lie on the Extracellular side of the membrane; sequence MSTDCAGNSTCPVNSTEEDPPVGMEGHANLKL. N-linked (GlcNAc...) asparagine glycans are attached at residues asparagine 8 and asparagine 14. A helical membrane pass occupies residues 33 to 53; the sequence is LFTVLSAVMVGLVMFSFGCSV. The Cytoplasmic segment spans residues 54-67; it reads ESQKLWLHLRRPWG. The helical transmembrane segment at 68–88 threads the bilayer; sequence IAVGLLSQFGLMPLTAYLLAI. Topologically, residues 89-97 are extracellular; that stretch reads GFGLKPFQA. Residues 98 to 118 traverse the membrane as a helical segment; it reads IAVLMMGSCPGGTISNVLTFW. Over 119 to 126 the chain is Cytoplasmic; that stretch reads VDGDMDLS. A helical membrane pass occupies residues 127-147; the sequence is ISMTTCSTVAALGMMPLCLYI. The Extracellular segment spans residues 148-157; it reads YTRSWTLTQN. The chain crosses the membrane as a helical span at residues 158 to 178; the sequence is LVIPYQSIGITLVSLVVPVAS. Over 179 to 195 the chain is Cytoplasmic; that stretch reads GVYVNYRWPKQATVILK. The chain crosses the membrane as a helical span at residues 196-216; the sequence is VGAILGGMLLLVVAVTGMVLA. At 217–224 the chain is on the extracellular side; sequence KGWNTDVT. The helical transmembrane segment at 225–245 threads the bilayer; that stretch reads LLVISCIFPLVGHVTGFLLAF. The Cytoplasmic portion of the chain corresponds to 246–265; sequence LTHQSWQRCRTISIETGAQN. A helical transmembrane segment spans residues 266 to 283; that stretch reads IQLCIAMLQLSFSAEYLV. Residue glutamine 284 is a topological domain, extracellular. A helical membrane pass occupies residues 285-305; it reads LLNFALAYGLFQVLHGLLIVA. The Cytoplasmic segment spans residues 306-373; sequence AYQAYKRRQK…ELTSHIPSCE (68 aa).

It belongs to the bile acid:sodium symporter (BASS) (TC 2.A.28) family. In terms of processing, glycosylated. Highest expression in lung and testis, moderate expression in heart, bladder and skin, and low expression in blood, liver, stomach, small intestine, spleen, kidney, adrenal gland, seminal vesicle, preputial gland, coagulating gland, lacrimal gland/eye, and brain.

It is found in the membrane. The catalysed reaction is estrone 3-sulfate(out) + 2 Na(+)(out) = estrone 3-sulfate(in) + 2 Na(+)(in). It carries out the reaction 17beta-estradiol 3-sulfate(out) + 2 Na(+)(out) = 17beta-estradiol 3-sulfate(in) + 2 Na(+)(in). The enzyme catalyses dehydroepiandrosterone 3-sulfate(out) + 2 Na(+)(out) = dehydroepiandrosterone 3-sulfate(in) + 2 Na(+)(in). It catalyses the reaction androst-5-ene-diol 3-sulfate(out) + 2 Na(+)(out) = androst-5-ene-diol 3-sulfate(in) + 2 Na(+)(in). The catalysed reaction is pregnenolone sulfate(out) + 2 Na(+)(out) = pregnenolone sulfate(in) + 2 Na(+)(in). It carries out the reaction taurolithocholate 3-sulfate(out) + 2 Na(+)(out) = taurolithocholate 3-sulfate(in) + 2 Na(+)(in). The enzyme catalyses androsterone 3alpha-sulfate(out) + 2 Na(+)(out) = androsterone 3alpha-sulfate(in) + 2 Na(+)(in). It catalyses the reaction 5alpha-dihydrotestosterone sulfate(out) + 2 Na(+)(out) = 5alpha-dihydrotestosterone sulfate(in) + 2 Na(+)(in). The catalysed reaction is 17beta-estradiol 17-sulfate(out) + 2 Na(+)(out) = 17beta-estradiol 17-sulfate(in) + 2 Na(+)(in). It carries out the reaction 17alpha-hydroxypregnenolone 3-sulfate(out) + 2 Na(+)(out) = 17alpha-hydroxypregnenolone 3-sulfate(in) + 2 Na(+)(in). The enzyme catalyses epiandrosterone 3-sulfate(out) + 2 Na(+)(out) = epiandrosterone 3-sulfate(in) + 2 Na(+)(in). It catalyses the reaction epitestosterone 17-sulfate(out) + 2 Na(+)(out) = epitestosterone 17-sulfate(in) + 2 Na(+)(in). The catalysed reaction is testosterone 17-sulfate(out) + 2 Na(+)(out) = testosterone 17-sulfate(in) + 2 Na(+)(in). It carries out the reaction 16alpha-hydroxydehydroepiandrosterone 3-sulfate(out) + 2 Na(+)(out) = 16alpha-hydroxydehydroepiandrosterone 3-sulfate(in) + 2 Na(+)(in). Functionally, transports sulfoconjugated steroid hormones from the extracellular compartment into the cytosol in a sodium-dependent manner without hydrolysis. Steroid sulfate hormones are commonly considered to be biologically inactive metabolites, that may be activated by steroid sulfatases into free steroids. May play an important role by delivering sulfoconjugated steroids to specific target cells in reproductive organs. May play a role transporting the estriol precursor 16alpha-hydroxydehydroepiandrosterone 3-sulfate (16a-OH-DHEAS) at the fetal blood vessel endothelium. Can also transport other sulfoconjugated molecules such as taurolithocholic acid-3-sulfate and sulfoconjugated pyrenes. The sequence is that of Sodium-dependent organic anion transporter (Slc10a6) from Mus musculus (Mouse).